The chain runs to 260 residues: Hydroxyethylthiazole kinase 1 (260 aa).

Met-39 provides a ligand contact to substrate. The ATP site is built by Arg-115 and Thr-160. Substrate is bound at residue Gly-187.

Belongs to the Thz kinase family. The cofactor is Mg(2+).

The catalysed reaction is 5-(2-hydroxyethyl)-4-methylthiazole + ATP = 4-methyl-5-(2-phosphooxyethyl)-thiazole + ADP + H(+). It participates in cofactor biosynthesis; thiamine diphosphate biosynthesis; 4-methyl-5-(2-phosphoethyl)-thiazole from 5-(2-hydroxyethyl)-4-methylthiazole: step 1/1. Catalyzes the phosphorylation of the hydroxyl group of 4-methyl-5-beta-hydroxyethylthiazole (THZ). This chain is Hydroxyethylthiazole kinase 1, found in Streptococcus pneumoniae serotype 19F (strain G54).